The sequence spans 359 residues: RNA 3'-terminal phosphate cyclase (359 aa).

ATP is bound by residues Gln-100 and 291-294 (HASD). The active-site Tele-AMP-histidine intermediate is His-317.

It belongs to the RNA 3'-terminal cyclase family. Type 1 subfamily.

It is found in the cytoplasm. It catalyses the reaction a 3'-end 3'-phospho-ribonucleotide-RNA + ATP = a 3'-end 2',3'-cyclophospho-ribonucleotide-RNA + AMP + diphosphate. Catalyzes the conversion of 3'-phosphate to a 2',3'-cyclic phosphodiester at the end of RNA. The mechanism of action of the enzyme occurs in 3 steps: (A) adenylation of the enzyme by ATP; (B) transfer of adenylate to an RNA-N3'P to produce RNA-N3'PP5'A; (C) and attack of the adjacent 2'-hydroxyl on the 3'-phosphorus in the diester linkage to produce the cyclic end product. The biological role of this enzyme is unknown but it is likely to function in some aspects of cellular RNA processing. This Hyperthermus butylicus (strain DSM 5456 / JCM 9403 / PLM1-5) protein is RNA 3'-terminal phosphate cyclase.